A 226-amino-acid polypeptide reads, in one-letter code: Phosphoglycolate phosphatase (226 aa).

Catalysis depends on aspartate 5, which acts as the Nucleophile. The Mg(2+) site is built by aspartate 5 and aspartate 7. Position 142 (lysine 142) interacts with substrate. The Mg(2+) site is built by aspartate 164 and aspartate 168.

It belongs to the archaeal SPP-like hydrolase family. The cofactor is Mg(2+).

It carries out the reaction 2-phosphoglycolate + H2O = glycolate + phosphate. Catalyzes the dephosphorylation of 2-phosphoglycolate. This is Phosphoglycolate phosphatase from Sulfurisphaera tokodaii (strain DSM 16993 / JCM 10545 / NBRC 100140 / 7) (Sulfolobus tokodaii).